The primary structure comprises 609 residues: Non-structural glycoprotein (609 aa).

Residues 1–24 form the signal peptide; that stretch reads MDFLRQCTLIQVMILAITIRLTHG. Topologically, residues 25–581 are extracellular; it reads GWTNFPESCV…EKDYWHEEYN (557 aa). 9 N-linked (GlcNAc...) asparagine; by host glycosylation sites follow: Asn-87, Asn-375, Asn-465, Asn-472, Asn-478, Asn-506, Asn-529, Asn-551, and Asn-562. A helical membrane pass occupies residues 582-599; that stretch reads MWGLSGLSFLLLLALFYN. The Cytoplasmic segment spans residues 600-609; that stretch reads KIKRKIKRKS.

Belongs to the ephemerovirus glycoprotein family.

Its subcellular location is the membrane. This is Non-structural glycoprotein (GNS) from Adelaide River virus (ARV).